Reading from the N-terminus, the 1382-residue chain is Ninein-like protein (1382 aa).

2 consecutive EF-hand domains span residues 7–42 (HYVS…LHLE) and 41–76 (LEQQ…VLSS). The segment at 144-164 (ASLESVESPKSDEEAESTKEA) is disordered. Serine 148 is modified (phosphoserine). Basic and acidic residues predominate over residues 150-164 (ESPKSDEEAESTKEA). EF-hand domains are found at residues 196-231 (TPES…VGLQ) and 233-268 (LEKE…HEPA). Ca(2+)-binding residues include aspartate 246, aspartate 248, aspartate 250, lysine 252, and glutamate 257. Coiled-coil stretches lie at residues 384 to 424 (QELS…MDDC), 484 to 579 (AGLR…WARL), and 616 to 699 (IETE…QLQD). Residues 495 to 497 (KEN) carry the KEN box motif. The D-box signature appears at 633-641 (RTQLETKVN). Disordered stretches follow at residues 857 to 969 (PLAW…ASCR) and 982 to 1006 (RARS…GALE). Residues 991 to 1004 (QEQASEQQARAEGA) show a composition bias toward low complexity. Residues 1046–1375 (ETKIALEREK…RALNKLVSRI (330 aa)) are a coiled coil.

As to quaternary structure, interacts with gamma-tubulin and TUBGCP4. Interacts with anaphase promoting complex/cyclosome (APC/C). Interacts with CDC20 and FZR1. Isoform 2 interacts with LCA5 and USH2A. Isoform 2 interacts with DZANK1. In terms of processing, phosphorylated by PLK1 which disrupts its centrosome association and interaction with gamma-tubulin. Ubiquitinated by the APC/C complex leading to its degradation. Expressed in KYSE-150 esophageal carcinoma, HeLa cervical carcinoma and U2OS osteosarcoma cells. Expression is regulated in a cell cycle-dependent manner and peaks during G2/M phase (at protein level). Expressed in fetal heart, skeletal muscle, liver, lung and cochlea, and in adult brain, testis, kidney and retina.

Its subcellular location is the cytoplasm. The protein localises to the cytoskeleton. It localises to the microtubule organizing center. The protein resides in the centrosome. Involved in the microtubule organization in interphase cells. Overexpression induces the fragmentation of the Golgi, and causes lysosomes to disperse toward the cell periphery; it also interferes with mitotic spindle assembly. Involved in vesicle transport in photoreceptor cells. May play a role in ovarian carcinogenesis. The polypeptide is Ninein-like protein (NINL) (Homo sapiens (Human)).